The chain runs to 433 residues: Epi-neemfruitin B synthase L1AT (433 aa).

Catalysis depends on proton acceptor residues H151 and D372.

Belongs to the plant acyltransferase family. As to quaternary structure, monomer. Mainly expressed in petioles and, to a lower extent, in roots.

The enzyme catalyses (21S)-21-acetyl-1-hydroxy-apo-melianone + acetyl-CoA = epi-neemfruitin B + acetate + CoA + H(+). It participates in secondary metabolite biosynthesis; terpenoid biosynthesis. Functionally, acetyltransferase involved in the biosynthesis of limonoids triterpene natural products such as azadirachtin, an antifeedant widely used as bioinsecticide, and possessing many medicinal applications including anti-tumoral, anti-malarial, anti-rheumatic, antibacterial, anti-inflammatory, anti-pyretic and diuretic effects. Catalyzes the formation of epi-neemfruitin B from (21S)-21-acetyl-1-hydroxy-apo-melianone. The chain is Epi-neemfruitin B synthase L1AT from Melia azedarach (Chinaberry tree).